The sequence spans 414 residues: CinA-like protein (414 aa).

It belongs to the CinA family.

The protein is CinA-like protein of Akkermansia muciniphila (strain ATCC BAA-835 / DSM 22959 / JCM 33894 / BCRC 81048 / CCUG 64013 / CIP 107961 / Muc).